The following is a 117-amino-acid chain: uncharacterized protein (117 aa).

The interval 1 to 20 is disordered; sequence METKKLIGKPLQPARPVRHL.

This is an uncharacterized protein from Homo sapiens (Human).